The primary structure comprises 211 residues: Histidine biosynthesis bifunctional protein HisIE (211 aa).

Residues 1-122 are phosphoribosyl-AMP cyclohydrolase; sequence MSFKTAEVSS…DPQEESQMVW (122 aa). Residues 123–211 are phosphoribosyl-ATP pyrophosphohydrolase; sequence LHQLEQLLAA…VINKLKERHK (89 aa).

It in the N-terminal section; belongs to the PRA-CH family. The protein in the C-terminal section; belongs to the PRA-PH family.

It is found in the cytoplasm. The enzyme catalyses 1-(5-phospho-beta-D-ribosyl)-ATP + H2O = 1-(5-phospho-beta-D-ribosyl)-5'-AMP + diphosphate + H(+). It carries out the reaction 1-(5-phospho-beta-D-ribosyl)-5'-AMP + H2O = 1-(5-phospho-beta-D-ribosyl)-5-[(5-phospho-beta-D-ribosylamino)methylideneamino]imidazole-4-carboxamide. It participates in amino-acid biosynthesis; L-histidine biosynthesis; L-histidine from 5-phospho-alpha-D-ribose 1-diphosphate: step 2/9. It functions in the pathway amino-acid biosynthesis; L-histidine biosynthesis; L-histidine from 5-phospho-alpha-D-ribose 1-diphosphate: step 3/9. This chain is Histidine biosynthesis bifunctional protein HisIE, found in Vibrio vulnificus (strain CMCP6).